The primary structure comprises 307 residues: Inner spore coat protein H-like protein (307 aa).

It belongs to the CotH family.

The protein resides in the spore coat. Functionally, involved in the assembly of several proteins in the inner and outer layer of the spore coat. This is Inner spore coat protein H-like protein (yisJ) from Bacillus subtilis (strain 168).